The following is a 253-amino-acid chain: Triosephosphate isomerase (253 aa).

A substrate-binding site is contributed by 12–14; the sequence is NWK. H100 acts as the Electrophile in catalysis. The active-site Proton acceptor is E170. Substrate contacts are provided by residues G176, S215, and 236-237; that span reads GG.

The protein belongs to the triosephosphate isomerase family. In terms of assembly, homodimer.

It is found in the cytoplasm. It carries out the reaction D-glyceraldehyde 3-phosphate = dihydroxyacetone phosphate. The protein operates within carbohydrate biosynthesis; gluconeogenesis. It functions in the pathway carbohydrate degradation; glycolysis; D-glyceraldehyde 3-phosphate from glycerone phosphate: step 1/1. In terms of biological role, involved in the gluconeogenesis. Catalyzes stereospecifically the conversion of dihydroxyacetone phosphate (DHAP) to D-glyceraldehyde-3-phosphate (G3P). The protein is Triosephosphate isomerase of Rhodopseudomonas palustris (strain BisA53).